The following is a 312-amino-acid chain: 4-hydroxyphenylacetate decarboxylase activating enzyme (312 aa).

The Radical SAM core domain maps to 16–299 (HDGPGCRTSV…MEHLQQLYLD (284 aa)). Residues Cys-30, Cys-34, Cys-37, Cys-56, Cys-62, Cys-65, and Cys-101 each coordinate [4Fe-4S] cluster. S-adenosyl-L-methionine is bound at residue 36–38 (WCA). 4Fe-4S ferredoxin-type domains are found at residues 47-79 (KHIM…FSED) and 80-112 (GKLK…CVKE). Residues Gly-140, 189–191 (DVK), and His-263 contribute to the S-adenosyl-L-methionine site.

It belongs to the organic radical-activating enzymes family. Monomer. It depends on [4Fe-4S] cluster as a cofactor.

The enzyme catalyses glycyl-[protein] + reduced [flavodoxin] + S-adenosyl-L-methionine = glycin-2-yl radical-[protein] + semiquinone [flavodoxin] + 5'-deoxyadenosine + L-methionine + H(+). Functionally, catalyzes activation of 4-hydroxyphenylacetate decarboxylase under anaerobic conditions by generation of an organic free radical on a glycine residue, via a homolytic cleavage of S-adenosyl-L-methionine (SAM). The polypeptide is 4-hydroxyphenylacetate decarboxylase activating enzyme (Clostridium scatologenes).